The sequence spans 393 residues: NAD(P)H-quinone oxidoreductase subunit H, chloroplastic (393 aa).

Belongs to the complex I 49 kDa subunit family. As to quaternary structure, NDH is composed of at least 16 different subunits, 5 of which are encoded in the nucleus.

The protein localises to the plastid. It localises to the chloroplast thylakoid membrane. The catalysed reaction is a plastoquinone + NADH + (n+1) H(+)(in) = a plastoquinol + NAD(+) + n H(+)(out). It catalyses the reaction a plastoquinone + NADPH + (n+1) H(+)(in) = a plastoquinol + NADP(+) + n H(+)(out). Functionally, NDH shuttles electrons from NAD(P)H:plastoquinone, via FMN and iron-sulfur (Fe-S) centers, to quinones in the photosynthetic chain and possibly in a chloroplast respiratory chain. The immediate electron acceptor for the enzyme in this species is believed to be plastoquinone. Couples the redox reaction to proton translocation, and thus conserves the redox energy in a proton gradient. The chain is NAD(P)H-quinone oxidoreductase subunit H, chloroplastic from Cicer arietinum (Chickpea).